Reading from the N-terminus, the 269-residue chain is MKKIISLALALALSASAAELKMATTTSTDNTGLLDALKPLYEKESGNTLKWVAVGTGAALKMGEDCNADVLFVHSPKAEKEFMKKGFGVDRTPVMYNDFIIIADKSLASKFKGKNLKESLELIKNEKLTFISRGDKSGTDNKEKSLWKNLGGVPEKQSWYQQSGQGMLASIKIAEEKKGVILTDRGTYIKYEANEKGKPNLVIVNEGDDSLKNFYSVIATNPKHCKNVNYTEASKFIKWVTSDKTLNFIADFKLLNKPLFVIDAKTRKD.

The N-terminal stretch at 1–17 (MKKIISLALALALSASA) is a signal peptide.

The complex is composed of two ATP-binding proteins (TupC), two transmembrane proteins (TupB) and a solute-binding protein (TupA).

The protein localises to the periplasm. Its function is as follows. Part of an ABC transporter complex involved in ultra-high affinity tungstate uptake. Specifically binds tungstate. The protein is Tungstate-binding protein TupA of Campylobacter jejuni subsp. jejuni serotype O:2 (strain ATCC 700819 / NCTC 11168).